We begin with the raw amino-acid sequence, 272 residues long: Nuclear transcription factor Y subunit A-1 (272 aa).

2 disordered regions span residues 1–20 (MQSK…HAVQ) and 34–106 (SFGV…PALS). 2 stretches are compositionally biased toward polar residues: residues 46–61 (IPSN…GSES) and 82–92 (KDSQAATSSRS). The short motif at 175 to 198 (YVNAKQYEGILRRRKARAKAELER) is the Subunit association domain (SAD) element. A DNA-binding region (NFYA/HAP2-type) is located at residues 205 to 230 (KPYLHESRHKHAMRRARASGGRFAKK). Residues 206-272 (PYLHESRHKH…NETLNSSGAP (67 aa)) form a disordered region. The span at 211 to 221 (SRHKHAMRRAR) shows a compositional bias: basic residues. Positions 229-247 (KKSEVEAGEDAGGRDRERG) are enriched in basic and acidic residues. 2 stretches are compositionally biased toward polar residues: residues 248-257 (SATNSSGSEQ) and 263-272 (NETLNSSGAP).

This sequence belongs to the NFYA/HAP2 subunit family. Heterotrimeric transcription factor composed of three components, NF-YA, NF-YB and NF-YC. NF-YB and NF-YC must interact and dimerize for NF-YA association and DNA binding. As to expression, ubiquitous.

The protein localises to the nucleus. Functionally, stimulates the transcription of various genes by recognizing and binding to a CCAAT motif in promoters. This chain is Nuclear transcription factor Y subunit A-1 (NFYA1), found in Arabidopsis thaliana (Mouse-ear cress).